The primary structure comprises 293 residues: Putative immediate early glycoprotein (293 aa).

The N-terminal stretch at 1–21 (MKKLTMESLSVYIFVMGVCFT) is a signal peptide. N-linked (GlcNAc...) asparagine; by host glycosylation is found at N23, N55, N83, N120, N150, N156, N168, N212, and N249. Residues 262 to 282 (LFFLAGGAFTMLLLLCCLSMI) traverse the membrane as a helical segment.

It belongs to the herpesviridae immediate early glycoprotein family.

The protein localises to the membrane. The protein is Putative immediate early glycoprotein (U18) of Human herpesvirus 6A (strain Uganda-1102) (HHV-6 variant A).